Consider the following 403-residue polypeptide: Neuromedin U receptor homolog nmur-2 (403 aa).

Residues 1–27 (MSQCTVEYNVSEITEYVLSTLGERCQS) are Extracellular-facing. The helical transmembrane segment at 28–48 (AGIVIPTVIIYGTIFLLGLFG) threads the bilayer. Residues 49–68 (NICTCIVIAANKSMHNPTNY) lie on the Cytoplasmic side of the membrane. The chain crosses the membrane as a helical span at residues 69 to 89 (YLFSLAVSDIIALILGLPMEF). Topologically, residues 90-109 (YQSLDYSYPYRFSEGICKAR) are extracellular. A helical membrane pass occupies residues 110-130 (AFLIEFTSYASIMIICCFSFE). Residues 131 to 151 (RWLAICHPLRSKIFSTLWRAN) are Cytoplasmic-facing. A helical transmembrane segment spans residues 152 to 172 (VLIILAWTISFVCALPIAFIV). The Extracellular portion of the chain corresponds to 173–216 (QINKLPLPEDAKYQPWTNKVSTDGIFVLHTEFCAMNQSRPDQQK). Residues 217 to 237 (MIIIFAFTVFFVIPAIAIVIM) traverse the membrane as a helical segment. At 238-268 (YAHIAVQLESSEIDLKGDKMVKKRRNKSNRT) the chain is on the cytoplasmic side. The chain crosses the membrane as a helical span at residues 269-289 (VLKMLLSVVITFFICWLPFHI). Topologically, residues 290-304 (QRLLSVYTTWSETTT) are extracellular. Residues 305 to 325 (ISPPVQFLSMIVFYISGFCYY) traverse the membrane as a helical segment. At 326–403 (SNSAANPILY…PHRKLEVHNY (78 aa)) the chain is on the cytoplasmic side.

It belongs to the G-protein coupled receptor 1 family.

The protein localises to the membrane. Functionally, putative G protein-coupled receptor for pyrokinin-like neuropeptide derived from the processing of the neuropeptide precursor capa-1. In Caenorhabditis elegans, this protein is Neuromedin U receptor homolog nmur-2.